We begin with the raw amino-acid sequence, 100 residues long: NADH-quinone oxidoreductase subunit K (100 aa).

3 helical membrane-spanning segments follow: residues 4–24 (LQHG…GLVI), 28–48 (LLFM…AFVV), and 60–80 (VMYI…LALL).

The protein belongs to the complex I subunit 4L family. NDH-1 is composed of 13 different subunits. Subunits NuoA, H, J, K, L, M, N constitute the membrane sector of the complex.

It localises to the cell inner membrane. It catalyses the reaction a quinone + NADH + 5 H(+)(in) = a quinol + NAD(+) + 4 H(+)(out). In terms of biological role, NDH-1 shuttles electrons from NADH, via FMN and iron-sulfur (Fe-S) centers, to quinones in the respiratory chain. The immediate electron acceptor for the enzyme in this species is believed to be ubiquinone. Couples the redox reaction to proton translocation (for every two electrons transferred, four hydrogen ions are translocated across the cytoplasmic membrane), and thus conserves the redox energy in a proton gradient. The polypeptide is NADH-quinone oxidoreductase subunit K (Citrobacter koseri (strain ATCC BAA-895 / CDC 4225-83 / SGSC4696)).